Consider the following 824-residue polypeptide: Ent-copalyl diphosphate synthase AN1, chloroplastic (824 aa).

A chloroplast-targeting transit peptide spans 1 to 63 (MPYPHPYPWQ…SSAKVFQTSR (63 aa)). Residues 1–87 (MPYPHPYPWQ…QDLEDEHQAE (87 aa)) are disordered. Residues 44–63 (ATTTQQPDNVSSAKVFQTSR) are compositionally biased toward polar residues. K247 lines the substrate pocket. The Mg(2+) site is built by D379 and D381. The short motif at 379–382 (DVDD) is the DXDD motif element. Residue K465 coordinates substrate.

It belongs to the terpene synthase family. Tpsc subfamily. Requires Mg(2+) as cofactor.

It is found in the plastid. The protein localises to the chloroplast. The catalysed reaction is (2E,6E,10E)-geranylgeranyl diphosphate = ent-copalyl diphosphate. The protein operates within plant hormone biosynthesis; gibberellin biosynthesis. In terms of biological role, involved in giberellin biosynthesis. Catalyzes the conversion of geranylgeranyl diphosphate to the gibberellin precursor ent-copalyl diphosphate. The polypeptide is Ent-copalyl diphosphate synthase AN1, chloroplastic (Zea mays (Maize)).